We begin with the raw amino-acid sequence, 800 residues long: Mitochondrial intermediate peptidase (800 aa).

The transit peptide at 1-23 directs the protein to the mitochondrion; it reads MAGHMLMPLRRRPWTCRACLQRL. Residues 27-41 are compositionally biased toward polar residues; that stretch reads RRSLETAASPSSQSD. The disordered stretch occupies residues 27-59; it reads RRSLETAASPSSQSDVYDYAPTNHSTQKKSNDE. H563 is a Zn(2+) binding site. E564 is an active-site residue. Residues H567 and H570 each coordinate Zn(2+).

Belongs to the peptidase M3 family. It depends on Zn(2+) as a cofactor.

The protein resides in the mitochondrion matrix. It carries out the reaction Release of an N-terminal octapeptide as second stage of processing of some proteins imported into the mitochondrion.. Functionally, cleaves proteins, imported into the mitochondrion, to their mature size. While most mitochondrial precursor proteins are processed to the mature form in one step by mitochondrial processing peptidase (MPP), the sequential cleavage by MIP of an octapeptide after initial processing by MPP is a required step for a subgroup of nuclear-encoded precursor proteins destined for the matrix or the inner membrane. The chain is Mitochondrial intermediate peptidase (oct1) from Aspergillus oryzae (strain ATCC 42149 / RIB 40) (Yellow koji mold).